A 78-amino-acid chain; its full sequence is Large ribosomal subunit protein bL28 (78 aa).

The protein belongs to the bacterial ribosomal protein bL28 family.

This Prochlorococcus marinus (strain MIT 9301) protein is Large ribosomal subunit protein bL28.